The following is a 255-amino-acid chain: Acetylglutamate kinase (255 aa).

Substrate is bound by residues 40–41, R62, and N153; that span reads GG.

It belongs to the acetylglutamate kinase family. ArgB subfamily.

The protein resides in the cytoplasm. The enzyme catalyses N-acetyl-L-glutamate + ATP = N-acetyl-L-glutamyl 5-phosphate + ADP. It functions in the pathway amino-acid biosynthesis; L-arginine biosynthesis; N(2)-acetyl-L-ornithine from L-glutamate: step 2/4. In terms of biological role, catalyzes the ATP-dependent phosphorylation of N-acetyl-L-glutamate. This chain is Acetylglutamate kinase, found in Bacillus thuringiensis (strain Al Hakam).